The primary structure comprises 135 residues: MERTLVLIKPDGVRRNIIGEVISRIERKGLKIVAMELRTLDEETAKAHYEEHVEKPFFSSLVEFITGGPLVAMVVEGNRAIEAFRSLAGATDPVLAAPGTIRGDYGLDVQANIVHGSDSTYSAEREIKLFFPDLA.

Positions 9, 57, 85, 91, 102, and 112 each coordinate ATP. Residue His-115 is the Pros-phosphohistidine intermediate of the active site.

It belongs to the NDK family. In terms of assembly, homotetramer. Requires Mg(2+) as cofactor.

It is found in the cytoplasm. The enzyme catalyses a 2'-deoxyribonucleoside 5'-diphosphate + ATP = a 2'-deoxyribonucleoside 5'-triphosphate + ADP. The catalysed reaction is a ribonucleoside 5'-diphosphate + ATP = a ribonucleoside 5'-triphosphate + ADP. Major role in the synthesis of nucleoside triphosphates other than ATP. The ATP gamma phosphate is transferred to the NDP beta phosphate via a ping-pong mechanism, using a phosphorylated active-site intermediate. This chain is Nucleoside diphosphate kinase, found in Thermobifida fusca (strain YX).